The sequence spans 312 residues: MIKKRLFIGSSSEELKTAEIVKEVLLKDFEVTIWNDNVWDTAVFKINQNFLADLLKASLQFDFGILIGTKDDKVMFREVEMIQPRDNVLFELGLFTGRLGTSKCAFLIDKEIKLPSDFNGLTLARFDSTNEATVIAGANSIKDLFLASADDEINFFPSATLASVYYENLIVPICRFIIDNNGFTKGDTHYQKCKLNIIVPERINQDVNLQFEKLKGLFTTENVSFKYSGRPRQISVDTQIKNDTLEFIDFPTIITGINHAISNLLPNDFNKQSPDYSSILDRELRRFITTLKKLLIRGGFDEMVNVKRDSEL.

A TIR domain is found at 5 to 127 (RLFIGSSSEE…FNGLTLARFD (123 aa)).

The protein in the C-terminal section; belongs to the bacterial STING family. Forms homodimers; in the presence of c-di-GMP forms filaments with an ordered array of parallel-stacked subunits.

It catalyses the reaction NAD(+) + H2O = ADP-D-ribose + nicotinamide + H(+). Its activity is regulated as follows. NAD(+) hydrolase activity is strongly stimulated by c-di-GMP, weakly by 3'3'-cGAMP, very weakly by c-di-AMP but not at all by 2'3'-cGAMP. Self-association of TIR domains is required for NADase activity. In terms of biological role, effector protein of a CBASS antiviral system with NAD(+) hydrolase activity. CBASS (cyclic oligonucleotide-based antiphage signaling system) provides immunity against bacteriophage. The CD-NTase protein synthesizes cyclic nucleotides in response to infection; these serve as specific second messenger signals. The signals activate a diverse range of effectors, leading to bacterial cell death and thus abortive phage infection. A type I-D CBASS(GG) system. Functionally, binds c-di-GMP, does not bind cUMP-AMP. Upon activation by c-di-GMP forms filaments which hydrolyze NAD(+); filament formation is required for enzyme activation. The polypeptide is CD-NTase-associated protein 12 (Niabella drilacis (strain DSM 25811 / CCM 8410 / CCUG 62505 / LMG 26954 / E90)).